Here is a 479-residue protein sequence, read N- to C-terminus: Aspartyl/glutamyl-tRNA(Asn/Gln) amidotransferase subunit B (479 aa).

This sequence belongs to the GatB/GatE family. GatB subfamily. Heterotrimer of A, B and C subunits.

It carries out the reaction L-glutamyl-tRNA(Gln) + L-glutamine + ATP + H2O = L-glutaminyl-tRNA(Gln) + L-glutamate + ADP + phosphate + H(+). The catalysed reaction is L-aspartyl-tRNA(Asn) + L-glutamine + ATP + H2O = L-asparaginyl-tRNA(Asn) + L-glutamate + ADP + phosphate + 2 H(+). Functionally, allows the formation of correctly charged Asn-tRNA(Asn) or Gln-tRNA(Gln) through the transamidation of misacylated Asp-tRNA(Asn) or Glu-tRNA(Gln) in organisms which lack either or both of asparaginyl-tRNA or glutaminyl-tRNA synthetases. The reaction takes place in the presence of glutamine and ATP through an activated phospho-Asp-tRNA(Asn) or phospho-Glu-tRNA(Gln). The protein is Aspartyl/glutamyl-tRNA(Asn/Gln) amidotransferase subunit B of Streptococcus pyogenes serotype M49 (strain NZ131).